The primary structure comprises 246 residues: 2-deoxyglucose-6-phosphate phosphatase 1 (246 aa).

Catalysis depends on aspartate 83, which acts as the Nucleophile. Aspartate 83 lines the Mg(2+) pocket. Substrate-binding positions include aspartate 83, glutamate 92, and 146–149 (DVKN). Aspartate 183 serves as a coordination point for Mg(2+).

Belongs to the HAD-like hydrolase superfamily. DOG/GPP family. The cofactor is Mg(2+).

It carries out the reaction 2-deoxy-D-glucose 6-phosphate + H2O = 2-deoxy-D-glucose + phosphate. In terms of biological role, phosphatase that is active on 2-deoxy-D-glucose 6-phosphate (2-DOG-6P), as well as on fructose-1-P. The chain is 2-deoxyglucose-6-phosphate phosphatase 1 from Saccharomyces cerevisiae (strain ATCC 204508 / S288c) (Baker's yeast).